A 237-amino-acid chain; its full sequence is Homeobox protein Nkx-3.1 (237 aa).

A compositionally biased stretch (basic and acidic residues) spans 1–14; it reads MLRVAEPREPRVEA. Disordered stretches follow at residues 1–96 and 108–130; these read MLRV…EPES and EHNP…RSRA. Residues 24–34 show a composition bias toward polar residues; that stretch reads PTQSKRLTSFL. 2 stretches are compositionally biased toward basic and acidic residues: residues 38 to 47 and 57 to 71; these read ILRDRAERHG and PDPR…DKAG. The segment at residues 125-184 is a DNA-binding region (homeobox); sequence QKRSRAAFSHTQVIELERKFSHQKYLSAPERAHLAKNLKLTETQVKIWFQNRRYKTKRKQ.

Belongs to the NK-3 homeobox family. Interacts with serum response factor (SRF). Interacts with SPDEF. Interacts with WDR77. Interacts with TOPORS which polyubiquitinates NKX3-1 and induces its proteasomal degradation. Interacts with FEM1B. In terms of processing, ubiquitinated by TOPORS; monoubiquitinated at several residues and also polyubiquitinated on single residues. As to expression, expressed mostly in the male urogenital tract, with highest expression in the epithelial cells lining the ducts of anterior, dorsolateral and ventral prostate and in the bulbourethral gland, and much lower in the seminal vesicle and the testis. Expression in the prostate increases during sexual maturation and is drastically reduced following castration. Expressed also in brain (hippocampus and external granular layer of the cerebral cortex), kidney (intralobular arteries), thymus and adrenal and salivary glands.

It is found in the nucleus. Transcription factor, which binds preferentially the consensus sequence 5'-TAAGT[AG]-3' and can behave as a transcriptional repressor. Plays an important role in normal prostate development, regulating proliferation of glandular epithelium and in the formation of ducts in prostate. Acts as a tumor suppressor controlling prostate carcinogenesis, as shown by the ability to suppress growth and tumorigenicity of prostate carcinoma cells. Plays a role in the formation of minor salivary glands (particularly palatine and lingual glands). The chain is Homeobox protein Nkx-3.1 from Mus musculus (Mouse).